A 255-amino-acid polypeptide reads, in one-letter code: Tryptophan synthase alpha chain (255 aa).

Catalysis depends on proton acceptor residues Glu44 and Asp55.

The protein belongs to the TrpA family. Tetramer of two alpha and two beta chains.

It carries out the reaction (1S,2R)-1-C-(indol-3-yl)glycerol 3-phosphate + L-serine = D-glyceraldehyde 3-phosphate + L-tryptophan + H2O. It participates in amino-acid biosynthesis; L-tryptophan biosynthesis; L-tryptophan from chorismate: step 5/5. Functionally, the alpha subunit is responsible for the aldol cleavage of indoleglycerol phosphate to indole and glyceraldehyde 3-phosphate. The sequence is that of Tryptophan synthase alpha chain from Dehalococcoides mccartyi (strain ATCC BAA-2100 / JCM 16839 / KCTC 5957 / BAV1).